The primary structure comprises 262 residues: Ninja-family protein 3 (262 aa).

Residues 48-69 are disordered; the sequence is RRNSLTCNTSKEAAGQSPEEMN.

This sequence belongs to the Ninja family.

Its subcellular location is the nucleus. This Zea mays (Maize) protein is Ninja-family protein 3.